We begin with the raw amino-acid sequence, 152 residues long: Large ribosomal subunit protein bL9 (152 aa).

This sequence belongs to the bacterial ribosomal protein bL9 family.

Binds to the 23S rRNA. The polypeptide is Large ribosomal subunit protein bL9 (Corynebacterium urealyticum (strain ATCC 43042 / DSM 7109)).